We begin with the raw amino-acid sequence, 61 residues long: Small ribosomal subunit protein uS14 (61 aa).

Cys24, Cys27, Cys40, and Cys43 together coordinate Zn(2+).

The protein belongs to the universal ribosomal protein uS14 family. Zinc-binding uS14 subfamily. Part of the 30S ribosomal subunit. Contacts proteins S3 and S10. The cofactor is Zn(2+).

In terms of biological role, binds 16S rRNA, required for the assembly of 30S particles and may also be responsible for determining the conformation of the 16S rRNA at the A site. The polypeptide is Small ribosomal subunit protein uS14 (Finegoldia magna (strain ATCC 29328 / DSM 20472 / WAL 2508) (Peptostreptococcus magnus)).